The sequence spans 472 residues: RVRKKDYFGIWSFPLIIAAVCAQSVNDPSNMSLVKETVDRLLKGYDIRLRPDFGGPPVAVGMNIDIASIDMVSEVNMDYTLTMYFQQAWRDKRLSYNVIPLNLTLDNRVADQLWVPDTYFLNDKKSFVHGVTVKNRMIRLHPDGTVLYGLRITTTTACMMDLRRYPLDEQNCTLEIESYGYTTDDIEFYWRGDDNAVTGVTKIELPQFSIVDYKLITKKVVFSTGSYPRLSLSFKLKRNIGYFILQTYMPSILITILSWVSFWINYDASAARVALGITTVLTMTTINTHLRETLPKIPYVKAIDMYLMGCFVFVFMALLEYALVNYIFFGRGPQRQKKAAEKAASANNEKMRLDVNKMDPHENILLSTLEIKNEMATSEAVMGLGDPRSTMLAYDASSIQYRKAGLPRHSFWRNALERHVAQKKSRLRERASQLKITIPDLTDVNAIDRWSRIFFPVVFSFFNIVYWLYYVN.

Residues 1–23 form the signal peptide; sequence RVRKKDYFGIWSFPLIIAAVCAQ. Over 24-239 the chain is Extracellular; sequence SVNDPSNMSL…LSLSFKLKRN (216 aa). Asn30 and Asn102 each carry an N-linked (GlcNAc...) asparagine glycan. Residue Tyr119 coordinates histamine. Cys158 and Cys172 form a disulfide bridge. Residues 178-179 and Thr224 contribute to the histamine site; that span reads SY. Residues Tyr179 and Thr224 each contribute to the 4-aminobutanoate site. Helical transmembrane passes span 240-260, 271-290, and 309-329; these read IGYF…LSWV, ARVA…NTHL, and GCFV…YIFF. Residues 287–308 are etomidate binding; allosteric effector; sequence NTHLRETLPKIPYVKAIDMYLM. Over 330 to 450 the chain is Cytoplasmic; the sequence is GRGPQRQKKA…LTDVNAIDRW (121 aa). A Phosphotyrosine modification is found at Tyr401. Residues 451 to 471 traverse the membrane as a helical segment; sequence SRIFFPVVFSFFNIVYWLYYV.

Belongs to the ligand-gated ion channel (TC 1.A.9) family. Gamma-aminobutyric acid receptor (TC 1.A.9.5) subfamily. GABRB2 sub-subfamily. As to quaternary structure, heteropentamer, formed by a combination of alpha (GABRA1-6), beta (GABRB1-3), gamma (GABRG1-3), delta (GABRD), epsilon (GABRE), rho (GABRR1-3), pi (GABRP) and theta (GABRQ) chains, each subunit exhibiting distinct physiological and pharmacological properties. Interacts with UBQLN1. May interact with KIF21B. Identified in a complex of 720 kDa composed of LHFPL4, NLGN2, GABRA1, GABRB2, GABRG2 and GABRB3. Post-translationally, glycosylated.

Its subcellular location is the postsynaptic cell membrane. The protein resides in the cell membrane. It localises to the cytoplasmic vesicle membrane. The catalysed reaction is chloride(in) = chloride(out). Its activity is regulated as follows. Allosterically activated by benzodiazepines. Allosterically activated by the anesthetic etomidate. Inhibited by the antagonist bicuculline. Potentiated by histamine. Its function is as follows. Beta subunit of the heteropentameric ligand-gated chloride channel gated by gamma-aminobutyric acid (GABA), a major inhibitory neurotransmitter in the brain. GABA-gated chloride channels, also named GABA(A) receptors (GABAAR), consist of five subunits arranged around a central pore and contain GABA active binding site(s) located at the alpha and beta subunit interface(s). When activated by GABA, GABAARs selectively allow the flow of chloride anions across the cell membrane down their electrochemical gradient. Chloride influx into the postsynaptic neuron following GABAAR opening decreases the neuron ability to generate a new action potential, thereby reducing nerve transmission. GABAARs containing alpha-1 and beta-2 or -3 subunits exhibit synaptogenic activity; the gamma-2 subunit being necessary but not sufficient to induce rapid synaptic contacts formation. Extrasynaptic beta-2 receptors contribute to the tonic GABAergic inhibition. Beta-containing GABAARs can simultaneously bind GABA and histamine where histamine binds at the interface of two neighboring beta subunits, which may be involved in the regulation of sleep and wakefulness. The sequence is that of Gamma-aminobutyric acid receptor subunit beta-2 (GABRB2) from Bos taurus (Bovine).